An 81-amino-acid chain; its full sequence is MSHTVKIYDTCIGCTQCVRACPTDVLEMIPWDGCKANQIASSPRTEDCVGCKRCESACPTDFLSVRVYLGSETTRSMGLAY.

2 consecutive 4Fe-4S ferredoxin-type domains span residues 2–31 and 39–68; these read SHTVKIYDTCIGCTQCVRACPTDVLEMIPW and IASSPRTEDCVGCKRCESACPTDFLSVRVY. 8 residues coordinate [4Fe-4S] cluster: Cys11, Cys14, Cys17, Cys21, Cys48, Cys51, Cys54, and Cys58.

As to quaternary structure, the eukaryotic PSI reaction center is composed of at least 11 subunits. [4Fe-4S] cluster is required as a cofactor.

Its subcellular location is the plastid. The protein localises to the chloroplast thylakoid membrane. It catalyses the reaction reduced [plastocyanin] + hnu + oxidized [2Fe-2S]-[ferredoxin] = oxidized [plastocyanin] + reduced [2Fe-2S]-[ferredoxin]. Functionally, apoprotein for the two 4Fe-4S centers FA and FB of photosystem I (PSI); essential for photochemical activity. FB is the terminal electron acceptor of PSI, donating electrons to ferredoxin. The C-terminus interacts with PsaA/B/D and helps assemble the protein into the PSI complex. Required for binding of PsaD and PsaE to PSI. PSI is a plastocyanin-ferredoxin oxidoreductase, converting photonic excitation into a charge separation, which transfers an electron from the donor P700 chlorophyll pair to the spectroscopically characterized acceptors A0, A1, FX, FA and FB in turn. The protein is Photosystem I iron-sulfur center of Chaetosphaeridium globosum (Charophycean green alga).